A 542-amino-acid polypeptide reads, in one-letter code: Chaperonin GroEL 2 (542 aa).

Residues threonine 29–proline 32, aspartate 86–threonine 90, glycine 413, asparagine 477–alanine 479, and aspartate 493 each bind ATP.

It belongs to the chaperonin (HSP60) family. As to quaternary structure, forms a cylinder of 14 subunits composed of two heptameric rings stacked back-to-back. Interacts with the co-chaperonin GroES.

It is found in the cytoplasm. It carries out the reaction ATP + H2O + a folded polypeptide = ADP + phosphate + an unfolded polypeptide.. Together with its co-chaperonin GroES, plays an essential role in assisting protein folding. The GroEL-GroES system forms a nano-cage that allows encapsulation of the non-native substrate proteins and provides a physical environment optimized to promote and accelerate protein folding. This chain is Chaperonin GroEL 2, found in Kineococcus radiotolerans (strain ATCC BAA-149 / DSM 14245 / SRS30216).